We begin with the raw amino-acid sequence, 212 residues long: Prolactin-3C1 (212 aa).

An N-terminal signal peptide occupies residues 1–29; the sequence is MQLSLTQARTWKGLFLLVSCMFLWVYVTA. Cysteine 80 and cysteine 188 form a disulfide bridge. Residue asparagine 100 is glycosylated (N-linked (GlcNAc...) asparagine).

Belongs to the somatotropin/prolactin family. Expressed exclusively in decidua.

It localises to the secreted. This chain is Prolactin-3C1 (Prl3c1), found in Mus musculus (Mouse).